The primary structure comprises 110 residues: Cytochrome c oxidase subunit 4B (110 aa).

A run of 3 helical transmembrane segments spans residues Tyr-27–Ala-47, Gly-50–Phe-70, and Leu-88–Ile-108.

This sequence belongs to the cytochrome c oxidase bacterial subunit 4 family.

The protein localises to the cell membrane. It carries out the reaction 4 Fe(II)-[cytochrome c] + O2 + 8 H(+)(in) = 4 Fe(III)-[cytochrome c] + 2 H2O + 4 H(+)(out). This Bacillus subtilis (strain 168) protein is Cytochrome c oxidase subunit 4B (ctaF).